The chain runs to 429 residues: E3 ubiquitin-protein ligase ZNRF4 (429 aa).

Positions 1-27 are cleaved as a signal peptide; that stretch reads MPLCRPEHLMPRASRVPVAASLPLSHA. The Lumenal portion of the chain corresponds to 28-250; the sequence is VIPTQLPSRP…PPCHDLGCHP (223 aa). The disordered stretch occupies residues 30–67; that stretch reads PTQLPSRPGHRPPGRPRRCPKASCLPPPVGPSSTQTAK. Residues 37-49 are compositionally biased toward basic residues; it reads PGHRPPGRPRRCP. N-linked (GlcNAc...) asparagine glycosylation is found at N107, N152, and N229. The 73-residue stretch at 151-223 folds into the PA domain; that stretch reads GNRSLGAIVL…VSEAASQDLR (73 aa). Residues 251 to 271 form a helical membrane-spanning segment; that stretch reads VLTVSWVLGCTLALVVSAFFV. The Cytoplasmic portion of the chain corresponds to 272 to 429; the sequence is LNHLWLWAQA…SSAPPEAPGQ (158 aa). Residues 309–352 form an RING-type; atypical zinc finger; the sequence is CAICLDEYEEGDQLKILPCSHTYHCKCIDPWFSQAPRRSCPVCK.

In terms of assembly, interacts with CANX.

Its subcellular location is the endoplasmic reticulum membrane. The catalysed reaction is S-ubiquitinyl-[E2 ubiquitin-conjugating enzyme]-L-cysteine + [acceptor protein]-L-lysine = [E2 ubiquitin-conjugating enzyme]-L-cysteine + N(6)-ubiquitinyl-[acceptor protein]-L-lysine.. It participates in protein modification; protein ubiquitination. Functionally, E3 ubiquitin-protein ligase that acts as a negative regulator of NOD2 signaling by mediating ubiquitination and degradation of RIPK2. Also catalyzes ubiquitination and proteasomal degradation of CANX within the endoplasmic reticulum. Could have a role in spermatogenesis. The sequence is that of E3 ubiquitin-protein ligase ZNRF4 from Homo sapiens (Human).